The primary structure comprises 260 residues: MIIVLSPAKSLDYDTPAHVPSYTKPAFVDDASELIDGLRKLSPQDIATLMDISDPLARLNFQRYADWSPTFSPANAKQAVLAFNGDVYEGFDAKSLSAADLDYAQQHVRVLSGLYGLLRPLDLLQPYRLEMGTRFANARGKDLYAFWGDRITRALNEQLETRSGAARVLVNCASTEYFKSVKPKLLAAPVVTPVFEDWKGGRYKIISFHAKRARGLMARYIVENRIAEPAALKDFAMEDYVFDAAASNDSTYVYRRRIGE.

This sequence belongs to the UPF0246 family.

The polypeptide is UPF0246 protein BamMC406_2140 (Burkholderia ambifaria (strain MC40-6)).